Here is a 280-residue protein sequence, read N- to C-terminus: Bifunctional protein FolD (280 aa).

NADP(+)-binding positions include 166 to 168 (GRS) and Ser191.

Belongs to the tetrahydrofolate dehydrogenase/cyclohydrolase family. As to quaternary structure, homodimer.

The enzyme catalyses (6R)-5,10-methylene-5,6,7,8-tetrahydrofolate + NADP(+) = (6R)-5,10-methenyltetrahydrofolate + NADPH. The catalysed reaction is (6R)-5,10-methenyltetrahydrofolate + H2O = (6R)-10-formyltetrahydrofolate + H(+). It functions in the pathway one-carbon metabolism; tetrahydrofolate interconversion. Its function is as follows. Catalyzes the oxidation of 5,10-methylenetetrahydrofolate to 5,10-methenyltetrahydrofolate and then the hydrolysis of 5,10-methenyltetrahydrofolate to 10-formyltetrahydrofolate. The chain is Bifunctional protein FolD from Teredinibacter turnerae (strain ATCC 39867 / T7901).